The following is a 503-amino-acid chain: Aminoaldehyde dehydrogenase 1, peroxisomal (503 aa).

The Na(+) site is built by asparagine 27, isoleucine 28, aspartate 99, and leucine 189. 238–245 (GSSATGSK) is an NAD(+) binding site. Catalysis depends on glutamate 260, which acts as the Proton acceptor. Residues cysteine 294 and glutamate 393 each coordinate NAD(+). Cysteine 294 functions as the Nucleophile in the catalytic mechanism. Positions 501-503 (SKL) match the Microbody targeting signal motif.

Belongs to the aldehyde dehydrogenase family. In terms of assembly, forms homodimers.

It is found in the peroxisome. The catalysed reaction is 3-aminopropanal + NAD(+) + H2O = beta-alanine + NADH + 2 H(+). It catalyses the reaction 4-aminobutanal + NAD(+) + H2O = 4-aminobutanoate + NADH + 2 H(+). It carries out the reaction 4-guanidinobutanal + NAD(+) + H2O = 4-guanidinobutanoate + NADH + 2 H(+). The protein operates within amine and polyamine biosynthesis; betaine biosynthesis via choline pathway; betaine from betaine aldehyde: step 1/1. Dehydrogenase that catalyzes the oxidation of several aminoaldehydes. Metabolizes and detoxifies aldehyde products of polyamine degradation to non-toxic amino acids. Catalyzes the oxidation of 3-aminopropanal to beta-alanine. Catalyzes the oxidation of 4-aminobutanal to 4-aminobutanoate. Catalyzes the oxidation of 4-guanidinobutanal to 4-guanidinobutanoate. This chain is Aminoaldehyde dehydrogenase 1, peroxisomal, found in Pisum sativum (Garden pea).